Consider the following 444-residue polypeptide: Ribosomal protein uS12 methylthiotransferase RimO (444 aa).

Positions 4-118 (YKIGLISLGC…IQNYIDDFFN (115 aa)) constitute an MTTase N-terminal domain. [4Fe-4S] cluster contacts are provided by Cys-13, Cys-48, Cys-81, Cys-155, Cys-159, and Cys-162. The Radical SAM core domain occupies 141-371 (TTAKHMAYIR…MSIQQNVSSK (231 aa)). The region spanning 374–440 (KNKLEKVYKV…EYDLIGVVCD (67 aa)) is the TRAM domain.

This sequence belongs to the methylthiotransferase family. RimO subfamily. The cofactor is [4Fe-4S] cluster.

It is found in the cytoplasm. The catalysed reaction is L-aspartate(89)-[ribosomal protein uS12]-hydrogen + (sulfur carrier)-SH + AH2 + 2 S-adenosyl-L-methionine = 3-methylsulfanyl-L-aspartate(89)-[ribosomal protein uS12]-hydrogen + (sulfur carrier)-H + 5'-deoxyadenosine + L-methionine + A + S-adenosyl-L-homocysteine + 2 H(+). In terms of biological role, catalyzes the methylthiolation of an aspartic acid residue of ribosomal protein uS12. The protein is Ribosomal protein uS12 methylthiotransferase RimO of Clostridium novyi (strain NT).